A 377-amino-acid chain; its full sequence is RIB43A-like with coiled-coils protein 2 (377 aa).

A coiled-coil region spans residues 188 to 238 (ELKFDEAARDLQRLEITTRKAVCAAVKEFNKKQVVELAERKRQVKQQEQED). Positions 355 to 377 (QLDAAPSSQPTEDYFSQFNTRSR) are disordered. Residues 360 to 377 (PSSQPTEDYFSQFNTRSR) show a composition bias toward polar residues.

Belongs to the RIB43A family. As to quaternary structure, microtubule inner protein component of sperm flagellar doublet microtubules.

The protein resides in the cytoplasm. It is found in the cytoskeleton. Its subcellular location is the cilium axoneme. It localises to the flagellum axoneme. In terms of biological role, microtubule inner protein (MIP) part of the dynein-decorated doublet microtubules (DMTs) in cilia axoneme, which is required for motile cilia beating. This Rattus norvegicus (Rat) protein is RIB43A-like with coiled-coils protein 2.